Here is a 602-residue protein sequence, read N- to C-terminus: CDPK-related protein kinase (602 aa).

The segment at 1 to 59 (MGICVSKPSPEPDLHNHHTSIPVNDTSLPPQDNSIPPKDIAIPAQDNNKPPGKKSPFLP) is disordered. The segment covering 19-34 (TSIPVNDTSLPPQDNS) has biased composition (polar residues). A run of 3 repeats spans residues 20–26 (SIPVNDT), 27–33 (SLPPQDN), and 34–40 (SIPPKDI). The 3 X 7 AA tandem repeats of S-[LI]-P-X-X-D-X stretch occupies residues 20–40 (SIPVNDTSLPPQDNSIPPKDI). One can recognise a Protein kinase domain in the interval 148 to 410 (FEVGEEVGRG…AAQALCHSWI (263 aa)). ATP-binding positions include 154–162 (VGRGHFGYT) and Lys-180. Residue Asp-276 is the Proton acceptor of the active site. EF-hand domains follow at residues 451–486 (VDEL…RNST), 487–527 (DAMK…LEAL), 528–563 (DRWE…LGPS), and 564–602 (IPVH…AKAQ).

The protein belongs to the protein kinase superfamily. CAMK Ser/Thr protein kinase family. CaMK subfamily.

It carries out the reaction L-seryl-[protein] + ATP = O-phospho-L-seryl-[protein] + ADP + H(+). It catalyses the reaction L-threonyl-[protein] + ATP = O-phospho-L-threonyl-[protein] + ADP + H(+). The sequence is that of CDPK-related protein kinase (CRK) from Daucus carota (Wild carrot).